Consider the following 251-residue polypeptide: Ubiquinone/menaquinone biosynthesis C-methyltransferase UbiE (251 aa).

Residues Thr74, Asp95, and 123-124 (NA) each bind S-adenosyl-L-methionine.

It belongs to the class I-like SAM-binding methyltransferase superfamily. MenG/UbiE family.

The enzyme catalyses a 2-demethylmenaquinol + S-adenosyl-L-methionine = a menaquinol + S-adenosyl-L-homocysteine + H(+). It catalyses the reaction a 2-methoxy-6-(all-trans-polyprenyl)benzene-1,4-diol + S-adenosyl-L-methionine = a 5-methoxy-2-methyl-3-(all-trans-polyprenyl)benzene-1,4-diol + S-adenosyl-L-homocysteine + H(+). It participates in quinol/quinone metabolism; menaquinone biosynthesis; menaquinol from 1,4-dihydroxy-2-naphthoate: step 2/2. It functions in the pathway cofactor biosynthesis; ubiquinone biosynthesis. Methyltransferase required for the conversion of demethylmenaquinol (DMKH2) to menaquinol (MKH2) and the conversion of 2-polyprenyl-6-methoxy-1,4-benzoquinol (DDMQH2) to 2-polyprenyl-3-methyl-6-methoxy-1,4-benzoquinol (DMQH2). The polypeptide is Ubiquinone/menaquinone biosynthesis C-methyltransferase UbiE (Shewanella putrefaciens (strain CN-32 / ATCC BAA-453)).